The primary structure comprises 350 residues: MPVLHNRISNDALKAKMLAESEPRTTISFYKYFHIADPKATRDALYQLFTALNVFGRVYLAHEGINAQISVPASNVETFRAQLYAFDPALEGLRLNIALDDDGKSFWVLRMKVRDRIVADGIDDPHFDASNVGEYLQAAEVNAMLDDPDALFIDMRNHYEYEVGHFENALEIPADTFREQLPKAVEMMQAHKDKKIVMYCTGGIRCEKASAWMKHNGFNKVWHIEGGIIEYARKAREQGLPVRFIGKNFVFDERMGERISDEIIAHCHQCGAPCDSHTNCKNDGCHLLFIQCPVCAEKYKGCCSEICCEESALPPEEQRRRRAGRENGNKIFNKSRGRLNTTLGIPDPTE.

Residues 146–240 form the Rhodanese domain; that stretch reads DDPDALFIDM…YARKAREQGL (95 aa). Residue Cys-200 is the Cysteine persulfide intermediate of the active site.

It belongs to the TrhO family.

The catalysed reaction is uridine(34) in tRNA + AH2 + O2 = 5-hydroxyuridine(34) in tRNA + A + H2O. In terms of biological role, catalyzes oxygen-dependent 5-hydroxyuridine (ho5U) modification at position 34 in tRNAs. This chain is tRNA uridine(34) hydroxylase, found in Shigella flexneri serotype 5b (strain 8401).